Here is a 653-residue protein sequence, read N- to C-terminus: Beta-galactosidase-1-like protein 3 (653 aa).

The active-site Proton donor is Glu-227. Residue Glu-301 is the Nucleophile of the active site.

It belongs to the glycosyl hydrolase 35 family.

The polypeptide is Beta-galactosidase-1-like protein 3 (GLB1L3) (Homo sapiens (Human)).